We begin with the raw amino-acid sequence, 304 residues long: Methionyl-tRNA formyltransferase (304 aa).

109 to 112 (SDLP) is a binding site for (6S)-5,6,7,8-tetrahydrofolate.

The protein belongs to the Fmt family.

It catalyses the reaction L-methionyl-tRNA(fMet) + (6R)-10-formyltetrahydrofolate = N-formyl-L-methionyl-tRNA(fMet) + (6S)-5,6,7,8-tetrahydrofolate + H(+). Functionally, attaches a formyl group to the free amino group of methionyl-tRNA(fMet). The formyl group appears to play a dual role in the initiator identity of N-formylmethionyl-tRNA by promoting its recognition by IF2 and preventing the misappropriation of this tRNA by the elongation apparatus. The polypeptide is Methionyl-tRNA formyltransferase (Rickettsia bellii (strain RML369-C)).